Reading from the N-terminus, the 145-residue chain is Galectin-5 (145 aa).

N-acetylserine is present on Ser-2. In terms of domain architecture, Galectin spans 17-145 (FFTSIPNGLY…GDIQLTHVET (129 aa)). Residue 77–83 (WGPEERS) participates in a beta-D-galactoside binding.

In terms of assembly, monomer. As to expression, erythrocytes.

In terms of biological role, may function in erythrocyte differentiation. In Rattus norvegicus (Rat), this protein is Galectin-5 (Lgals5).